A 189-amino-acid chain; its full sequence is Potassium-transporting ATPase KdpC subunit (189 aa).

A helical membrane pass occupies residues 6–26 (PAIMMVLVFTIICGGIYPAVV).

Belongs to the KdpC family. The system is composed of three essential subunits: KdpA, KdpB and KdpC.

The protein localises to the cell inner membrane. In terms of biological role, part of the high-affinity ATP-driven potassium transport (or Kdp) system, which catalyzes the hydrolysis of ATP coupled with the electrogenic transport of potassium into the cytoplasm. This subunit acts as a catalytic chaperone that increases the ATP-binding affinity of the ATP-hydrolyzing subunit KdpB by the formation of a transient KdpB/KdpC/ATP ternary complex. In Geobacter metallireducens (strain ATCC 53774 / DSM 7210 / GS-15), this protein is Potassium-transporting ATPase KdpC subunit.